Reading from the N-terminus, the 713-residue chain is Methionine--tRNA ligase (713 aa).

Residues 17 to 27 (PYANGPIHIGH) carry the 'HIGH' region motif. Zn(2+) contacts are provided by Cys149, Cys152, Cys162, and Cys165. The short motif at 345 to 349 (KLSTS) is the 'KMSKS' region element. An ATP-binding site is contributed by Thr348. Residues 530–564 (VRTSTPDDDPAGAVGWEDAGAPLLPAGHPIPSGPD) are disordered. One can recognise a tRNA-binding domain in the interval 614-713 (DFTQLDLRAG…TEAEDGSVVR (100 aa)).

The protein belongs to the class-I aminoacyl-tRNA synthetase family. MetG type 1 subfamily. Homodimer. Zn(2+) serves as cofactor.

The protein resides in the cytoplasm. It carries out the reaction tRNA(Met) + L-methionine + ATP = L-methionyl-tRNA(Met) + AMP + diphosphate. Is required not only for elongation of protein synthesis but also for the initiation of all mRNA translation through initiator tRNA(fMet) aminoacylation. In Salinibacter ruber (strain DSM 13855 / M31), this protein is Methionine--tRNA ligase.